The sequence spans 215 residues: MGRVYDWFEERLEIQAIADDITSKYVPPHVNIFYCLGGITLTCFLVQVATGFAMTFYYRPTVTEAFASVQYIMTEVNFGWLIRSVHRWSASMMVLMMILHIFRVYLTGGFKKPRELTWVTGVILAVLTVSFGVTGYSLPWDQIGYWAVKIVTGVPEAIPVIGSPLVEILRGSVSVGQSTLTRFYSLHTFVLPLLTAVFMLMHFLMIRKQGISGPL.

Residues 32 to 52 form a helical membrane-spanning segment; sequence IFYCLGGITLTCFLVQVATGF. Residue cysteine 35 coordinates heme c. Heme b is bound by residues histidine 86 and histidine 100. 3 helical membrane-spanning segments follow: residues 90–110, 116–136, and 186–206; these read ASMM…TGGF, LTWV…VTGY, and LHTF…FLMI. Heme b contacts are provided by histidine 187 and histidine 202.

The protein belongs to the cytochrome b family. PetB subfamily. In terms of assembly, the 4 large subunits of the cytochrome b6-f complex are cytochrome b6, subunit IV (17 kDa polypeptide, PetD), cytochrome f and the Rieske protein, while the 4 small subunits are PetG, PetL, PetM and PetN. The complex functions as a dimer. Heme b is required as a cofactor. Requires heme c as cofactor.

The protein localises to the plastid. It localises to the chloroplast thylakoid membrane. Component of the cytochrome b6-f complex, which mediates electron transfer between photosystem II (PSII) and photosystem I (PSI), cyclic electron flow around PSI, and state transitions. The polypeptide is Cytochrome b6 (Physcomitrium patens (Spreading-leaved earth moss)).